The chain runs to 385 residues: Sulfoquinovose monooxygenase (385 aa).

The tract at residues 366–385 (AYGRVPSETPATPLGNGERH) is disordered.

Belongs to the SsuD family. As to quaternary structure, homodimer.

It carries out the reaction 6-sulfo-D-quinovose + FMNH2 + O2 = 6-dehydro-D-glucose + FMN + sulfite + H2O + 2 H(+). Part of the sulfoquinovose monooxygenase (sulfo-SMO) pathway, a D-sulfoquinovose degradation pathway that enables the complete utilization of all carbons within sulfoquinovose (SQ) with concomitant production of inorganic sulfite. Catalyzes the oxidative desulfurization of sulfoquinovose to sulfite and 6-dehydro-D-glucose. Is highly specific for sulfoquinovose and cannot use sulfoquinovosyl glycerol. FMNH(2) is provided by the FMN reductase SmoA. The sequence is that of Sulfoquinovose monooxygenase from Agrobacterium fabrum (strain C58 / ATCC 33970) (Agrobacterium tumefaciens (strain C58)).